Here is a 96-residue protein sequence, read N- to C-terminus: MNTIVKHTVGFIASIVLTLLAVFVTLYTNMTFHAKVTIIFGFAFIQAALQLLMFMHLTEGKDGRLQSFKVIFAIIITLVTVIGTYWVMQGGHSSHL.

Helical transmembrane passes span 8–28 (TVGF…TLYT), 36–56 (VTII…MFMH), and 68–88 (FKVI…YWVM).

It belongs to the cytochrome c oxidase bacterial subunit 4 family.

The protein localises to the cell membrane. The catalysed reaction is 2 a quinol + O2 = 2 a quinone + 2 H2O. In terms of biological role, catalyzes quinol oxidation with the concomitant reduction of oxygen to water. This is Probable quinol oxidase subunit 4 (qoxD) from Staphylococcus epidermidis (strain ATCC 35984 / DSM 28319 / BCRC 17069 / CCUG 31568 / BM 3577 / RP62A).